A 1358-amino-acid polypeptide reads, in one-letter code: Phosphoribosylformylglycinamidine synthase (1358 aa).

N-acetylthreonine is present on Thr2. The disordered stretch occupies residues 339 to 363 (AVSPFPGAATGSGGEIRDEGATGRG). Residues 345–356 (GAATGSGGEIRD), 424–426 (NGY), and Ala719 each bind ATP. Mg(2+) contacts are provided by Asp720, Glu762, Asn766, and Asp930. Position 932 (Ser932) interacts with ATP. The Glutamine amidotransferase type-1 domain occupies 1093–1358 (VAILREQGVN…LFRSARRWVG (266 aa)). Cys1187 functions as the Nucleophile in the catalytic mechanism. Catalysis depends on residues His1319 and Glu1321.

The protein in the N-terminal section; belongs to the FGAMS family.

It is found in the cytoplasm. It catalyses the reaction N(2)-formyl-N(1)-(5-phospho-beta-D-ribosyl)glycinamide + L-glutamine + ATP + H2O = 2-formamido-N(1)-(5-O-phospho-beta-D-ribosyl)acetamidine + L-glutamate + ADP + phosphate + H(+). It participates in purine metabolism; IMP biosynthesis via de novo pathway; 5-amino-1-(5-phospho-D-ribosyl)imidazole from N(2)-formyl-N(1)-(5-phospho-D-ribosyl)glycinamide: step 1/2. In terms of biological role, phosphoribosylformylglycinamidine synthase involved in the purines biosynthetic pathway. Catalyzes the ATP-dependent conversion of formylglycinamide ribonucleotide (FGAR) and glutamine to yield formylglycinamidine ribonucleotide (FGAM) and glutamate. This Saccharomyces cerevisiae (strain ATCC 204508 / S288c) (Baker's yeast) protein is Phosphoribosylformylglycinamidine synthase (ADE6).